Here is a 284-residue protein sequence, read N- to C-terminus: 4-hydroxy-3-methylbut-2-enyl diphosphate reductase (284 aa).

Cys-12 serves as a coordination point for [4Fe-4S] cluster. 2 residues coordinate (2E)-4-hydroxy-3-methylbut-2-enyl diphosphate: His-40 and His-72. Dimethylallyl diphosphate contacts are provided by His-40 and His-72. Positions 40 and 72 each coordinate isopentenyl diphosphate. Cys-94 provides a ligand contact to [4Fe-4S] cluster. His-122 is a (2E)-4-hydroxy-3-methylbut-2-enyl diphosphate binding site. A dimethylallyl diphosphate-binding site is contributed by His-122. His-122 provides a ligand contact to isopentenyl diphosphate. Residue Glu-124 is the Proton donor of the active site. Residue Thr-161 coordinates (2E)-4-hydroxy-3-methylbut-2-enyl diphosphate. [4Fe-4S] cluster is bound at residue Cys-193. Positions 221, 223, and 264 each coordinate (2E)-4-hydroxy-3-methylbut-2-enyl diphosphate. Positions 221, 223, and 264 each coordinate dimethylallyl diphosphate. The isopentenyl diphosphate site is built by Ser-221, Asn-223, and Ser-264.

Belongs to the IspH family. The cofactor is [4Fe-4S] cluster.

It catalyses the reaction isopentenyl diphosphate + 2 oxidized [2Fe-2S]-[ferredoxin] + H2O = (2E)-4-hydroxy-3-methylbut-2-enyl diphosphate + 2 reduced [2Fe-2S]-[ferredoxin] + 2 H(+). It carries out the reaction dimethylallyl diphosphate + 2 oxidized [2Fe-2S]-[ferredoxin] + H2O = (2E)-4-hydroxy-3-methylbut-2-enyl diphosphate + 2 reduced [2Fe-2S]-[ferredoxin] + 2 H(+). Its pathway is isoprenoid biosynthesis; dimethylallyl diphosphate biosynthesis; dimethylallyl diphosphate from (2E)-4-hydroxy-3-methylbutenyl diphosphate: step 1/1. The protein operates within isoprenoid biosynthesis; isopentenyl diphosphate biosynthesis via DXP pathway; isopentenyl diphosphate from 1-deoxy-D-xylulose 5-phosphate: step 6/6. Functionally, catalyzes the conversion of 1-hydroxy-2-methyl-2-(E)-butenyl 4-diphosphate (HMBPP) into a mixture of isopentenyl diphosphate (IPP) and dimethylallyl diphosphate (DMAPP). Acts in the terminal step of the DOXP/MEP pathway for isoprenoid precursor biosynthesis. In Dehalococcoides mccartyi (strain CBDB1), this protein is 4-hydroxy-3-methylbut-2-enyl diphosphate reductase.